A 544-amino-acid polypeptide reads, in one-letter code: Chaperonin GroEL 2 (544 aa).

ATP contacts are provided by residues 29 to 32, 86 to 90, Gly413, 479 to 481, and Asp495; these read TLGP, DGTTT, and NAA.

This sequence belongs to the chaperonin (HSP60) family. As to quaternary structure, forms a cylinder of 14 subunits composed of two heptameric rings stacked back-to-back. Interacts with the co-chaperonin GroES.

It localises to the cytoplasm. It catalyses the reaction ATP + H2O + a folded polypeptide = ADP + phosphate + an unfolded polypeptide.. In terms of biological role, together with its co-chaperonin GroES, plays an essential role in assisting protein folding. The GroEL-GroES system forms a nano-cage that allows encapsulation of the non-native substrate proteins and provides a physical environment optimized to promote and accelerate protein folding. In Trichodesmium erythraeum (strain IMS101), this protein is Chaperonin GroEL 2.